A 947-amino-acid polypeptide reads, in one-letter code: Protein translocase subunit SecA 1 (947 aa).

ATP contacts are provided by residues Q83, G101–T105, and D490. Positions A860–G947 are disordered. Residues T925–R934 are compositionally biased toward basic and acidic residues. Over residues K935–G947 the composition is skewed to basic residues.

It belongs to the SecA family. In terms of assembly, monomer and homodimer. Part of the essential Sec protein translocation apparatus which comprises SecA, SecYEG and auxiliary proteins SecDF. Other proteins may also be involved.

The protein localises to the cell membrane. Its subcellular location is the cytoplasm. The catalysed reaction is ATP + H2O + cellular proteinSide 1 = ADP + phosphate + cellular proteinSide 2.. Functionally, part of the Sec protein translocase complex. Interacts with the SecYEG preprotein conducting channel. Has a central role in coupling the hydrolysis of ATP to the transfer of proteins into and across the cell membrane, serving as an ATP-driven molecular motor driving the stepwise translocation of polypeptide chains across the membrane. The chain is Protein translocase subunit SecA 1 from Mycobacterium sp. (strain KMS).